A 388-amino-acid polypeptide reads, in one-letter code: Succinate--CoA ligase [ADP-forming] subunit beta (388 aa).

The ATP-grasp domain occupies 9–244 (KDLLVSYDIA…PSQENVRDVL (236 aa)). Residues lysine 46, 53-55 (GRG), valine 102, and glutamate 107 each bind ATP. Mg(2+) is bound by residues asparagine 199 and aspartate 213. Residues asparagine 264 and 321 to 323 (GIM) contribute to the substrate site.

Belongs to the succinate/malate CoA ligase beta subunit family. In terms of assembly, heterotetramer of two alpha and two beta subunits. It depends on Mg(2+) as a cofactor.

The catalysed reaction is succinate + ATP + CoA = succinyl-CoA + ADP + phosphate. It carries out the reaction GTP + succinate + CoA = succinyl-CoA + GDP + phosphate. The protein operates within carbohydrate metabolism; tricarboxylic acid cycle; succinate from succinyl-CoA (ligase route): step 1/1. Functionally, succinyl-CoA synthetase functions in the citric acid cycle (TCA), coupling the hydrolysis of succinyl-CoA to the synthesis of either ATP or GTP and thus represents the only step of substrate-level phosphorylation in the TCA. The beta subunit provides nucleotide specificity of the enzyme and binds the substrate succinate, while the binding sites for coenzyme A and phosphate are found in the alpha subunit. The polypeptide is Succinate--CoA ligase [ADP-forming] subunit beta (Chlamydia caviae (strain ATCC VR-813 / DSM 19441 / 03DC25 / GPIC) (Chlamydophila caviae)).